The following is a 35-amino-acid chain: UPF0387 membrane protein YohO (35 aa).

The chain crosses the membrane as a helical span at residues 6–26 (IGVIALFLFMALGGIGGVMLA).

It belongs to the UPF0387 family.

Its subcellular location is the cell inner membrane. The sequence is that of UPF0387 membrane protein YohO from Shigella boydii serotype 4 (strain Sb227).